Consider the following 173-residue polypeptide: Putative MgpC-like protein MPN_092 (173 aa).

The protein belongs to the MgpC family.

In Mycoplasma pneumoniae (strain ATCC 29342 / M129 / Subtype 1) (Mycoplasmoides pneumoniae), this protein is Putative MgpC-like protein MPN_092.